A 240-amino-acid polypeptide reads, in one-letter code: RNA-binding protein pno1 (240 aa).

A compositionally biased stretch (basic and acidic residues) spans 1–15; the sequence is MEAENIRADAFEPAK. The tract at residues 1–61 is disordered; the sequence is MEAENIRADA…APPKAKRARS (61 aa). One can recognise a KH domain in the interval 164–213; that stretch reads QSRAIGRLAGKGGRTKFTIENVTKTRIVLADSKIHILGSYQNIQLARRAV.

Belongs to the PNO1 family.

It localises to the nucleus. The protein resides in the nucleolus. This chain is RNA-binding protein pno1 (l(1)G0004), found in Drosophila melanogaster (Fruit fly).